A 354-amino-acid polypeptide reads, in one-letter code: Anthranilate phosphoribosyltransferase (354 aa).

5-phospho-alpha-D-ribose 1-diphosphate contacts are provided by residues G94, 97-98 (GD), T102, 104-107 (NIST), 122-130 (KHGNRAASS), and S134. Anthranilate is bound at residue G94. S106 is a Mg(2+) binding site. Residue N125 participates in anthranilate binding. R180 contacts anthranilate. Mg(2+)-binding residues include D238 and E239.

This sequence belongs to the anthranilate phosphoribosyltransferase family. In terms of assembly, homodimer. Mg(2+) serves as cofactor.

The catalysed reaction is N-(5-phospho-beta-D-ribosyl)anthranilate + diphosphate = 5-phospho-alpha-D-ribose 1-diphosphate + anthranilate. It participates in amino-acid biosynthesis; L-tryptophan biosynthesis; L-tryptophan from chorismate: step 2/5. Its function is as follows. Catalyzes the transfer of the phosphoribosyl group of 5-phosphorylribose-1-pyrophosphate (PRPP) to anthranilate to yield N-(5'-phosphoribosyl)-anthranilate (PRA). In Streptomyces griseus subsp. griseus (strain JCM 4626 / CBS 651.72 / NBRC 13350 / KCC S-0626 / ISP 5235), this protein is Anthranilate phosphoribosyltransferase.